The following is a 302-amino-acid chain: 4-hydroxy-tetrahydrodipicolinate synthase (302 aa).

Residue T46 participates in pyruvate binding. Y135 serves as the catalytic Proton donor/acceptor. K164 serves as the catalytic Schiff-base intermediate with substrate. A pyruvate-binding site is contributed by V206.

It belongs to the DapA family. In terms of assembly, homotetramer; dimer of dimers.

It is found in the cytoplasm. It catalyses the reaction L-aspartate 4-semialdehyde + pyruvate = (2S,4S)-4-hydroxy-2,3,4,5-tetrahydrodipicolinate + H2O + H(+). Its pathway is amino-acid biosynthesis; L-lysine biosynthesis via DAP pathway; (S)-tetrahydrodipicolinate from L-aspartate: step 3/4. Its function is as follows. Catalyzes the condensation of (S)-aspartate-beta-semialdehyde [(S)-ASA] and pyruvate to 4-hydroxy-tetrahydrodipicolinate (HTPA). The sequence is that of 4-hydroxy-tetrahydrodipicolinate synthase from Acidobacterium capsulatum (strain ATCC 51196 / DSM 11244 / BCRC 80197 / JCM 7670 / NBRC 15755 / NCIMB 13165 / 161).